A 674-amino-acid polypeptide reads, in one-letter code: Death-associated protein kinase related (674 aa).

A Protein kinase domain is found at 37–295 (EVEQTPFARG…ATGCLDHIWL (259 aa)). ATP contacts are provided by residues 43 to 51 (FARGKFAAV) and Lys-66. The active-site Proton acceptor is the Asp-160. 4 disordered regions span residues 308–388 (QPQS…GGSI), 412–440 (TLTS…SDKE), 511–583 (DSSG…TSGS), and 614–650 (TSSA…HHHV). Residues 312-343 (DAEEEEEEDVDDDVEDEEEEEQVEEEEEETQN) show a composition bias toward acidic residues. Over residues 352–363 (PQQQQQPVQQHQ) the composition is skewed to low complexity. The span at 373 to 382 (KPTHNGHHRA) shows a compositional bias: basic residues. 5 positions are modified to phosphoserine: Ser-384, Ser-387, Ser-435, Ser-437, and Ser-521. Residues 512-525 (SSGSAVARRSGGAV) show a composition bias toward low complexity. Composition is skewed to polar residues over residues 526–541 (TSSS…SVRL) and 555–564 (YKKQTSQNGC). Composition is skewed to low complexity over residues 565–583 (SSTS…TSGS) and 614–631 (TSSA…TSAA). A compositionally biased stretch (basic residues) spans 632-650 (HHLHHHHMHHHHHHHHHHV).

Belongs to the protein kinase superfamily. Ser/Thr protein kinase family.

It carries out the reaction L-seryl-[protein] + ATP = O-phospho-L-seryl-[protein] + ADP + H(+). The catalysed reaction is L-threonyl-[protein] + ATP = O-phospho-L-threonyl-[protein] + ADP + H(+). This is Death-associated protein kinase related (Drak) from Drosophila melanogaster (Fruit fly).